We begin with the raw amino-acid sequence, 239 residues long: Adenylate kinase 2 (239 aa).

ATP is bound at residue 29 to 34; that stretch reads GSGKGT. Positions 49–78 are NMP; the sequence is STGDILRAIIASGSELGQKVQKITESGGLV. AMP is bound by residues T50, R55, 76-78, 104-107, and Q111; these read GLV and GFPR. The segment at 145 to 182 is LID; the sequence is GRLFHLASGRSYHELFNPPKVPMVDDITGDRLVHRSDD. ATP is bound by residues R146 and 155–156; that span reads SY. R179 and R190 together coordinate AMP.

The protein belongs to the adenylate kinase family. AK2 subfamily. As to quaternary structure, monomer. It depends on Mg(2+) as a cofactor.

The protein resides in the cytoplasm. The protein localises to the cytosol. The catalysed reaction is AMP + ATP = 2 ADP. The protein operates within purine metabolism; purine nucleotide biosynthesis. In terms of biological role, catalyzes the reversible transfer of the terminal phosphate group between ATP and AMP. Plays an important role in cellular energy homeostasis and in adenine nucleotide metabolism. The chain is Adenylate kinase 2 from Schistosoma mansoni (Blood fluke).